The chain runs to 275 residues: tRNA pseudouridine synthase B (275 aa).

The active-site Nucleophile is the Asp-38.

Belongs to the pseudouridine synthase TruB family. Type 1 subfamily.

It carries out the reaction uridine(55) in tRNA = pseudouridine(55) in tRNA. Its function is as follows. Responsible for synthesis of pseudouridine from uracil-55 in the psi GC loop of transfer RNAs. This is tRNA pseudouridine synthase B from Nitratiruptor sp. (strain SB155-2).